The following is a 123-amino-acid chain: Large ribosomal subunit protein bL12 (123 aa).

Belongs to the bacterial ribosomal protein bL12 family. In terms of assembly, homodimer. Part of the ribosomal stalk of the 50S ribosomal subunit. Forms a multimeric L10(L12)X complex, where L10 forms an elongated spine to which 2 to 4 L12 dimers bind in a sequential fashion. Binds GTP-bound translation factors.

Its function is as follows. Forms part of the ribosomal stalk which helps the ribosome interact with GTP-bound translation factors. Is thus essential for accurate translation. The protein is Large ribosomal subunit protein bL12 of Rickettsia bellii (strain OSU 85-389).